The chain runs to 79 residues: UPF0180 protein BCAH820_1484 (79 aa).

This sequence belongs to the UPF0180 family.

In Bacillus cereus (strain AH820), this protein is UPF0180 protein BCAH820_1484.